The sequence spans 185 residues: Ribonuclease M5 (185 aa).

In terms of domain architecture, Toprim spans lysine 3–glycine 84. The Mg(2+) site is built by glutamate 9, aspartate 55, and aspartate 57.

It belongs to the ribonuclease M5 family. Requires Mg(2+) as cofactor.

Its subcellular location is the cytoplasm. The catalysed reaction is Endonucleolytic cleavage of RNA, removing 21 and 42 nucleotides, respectively, from the 5'- and 3'-termini of a 5S-rRNA precursor.. In terms of biological role, required for correct processing of both the 5' and 3' ends of 5S rRNA precursor. Cleaves both sides of a double-stranded region yielding mature 5S rRNA in one step. The protein is Ribonuclease M5 of Clostridium acetobutylicum (strain ATCC 824 / DSM 792 / JCM 1419 / IAM 19013 / LMG 5710 / NBRC 13948 / NRRL B-527 / VKM B-1787 / 2291 / W).